We begin with the raw amino-acid sequence, 485 residues long: Ribosomal protein uS12 methylthiotransferase RimO (485 aa).

An MTTase N-terminal domain is found at Val19–Ala135. Positions 28, 64, 98, 172, 176, and 179 each coordinate [4Fe-4S] cluster. In terms of domain architecture, Radical SAM core spans Ala158–Arg387. The region spanning Gln390–Glu461 is the TRAM domain.

It belongs to the methylthiotransferase family. RimO subfamily. [4Fe-4S] cluster is required as a cofactor.

It localises to the cytoplasm. It catalyses the reaction L-aspartate(89)-[ribosomal protein uS12]-hydrogen + (sulfur carrier)-SH + AH2 + 2 S-adenosyl-L-methionine = 3-methylsulfanyl-L-aspartate(89)-[ribosomal protein uS12]-hydrogen + (sulfur carrier)-H + 5'-deoxyadenosine + L-methionine + A + S-adenosyl-L-homocysteine + 2 H(+). Its function is as follows. Catalyzes the methylthiolation of an aspartic acid residue of ribosomal protein uS12. The protein is Ribosomal protein uS12 methylthiotransferase RimO of Symbiobacterium thermophilum (strain DSM 24528 / JCM 14929 / IAM 14863 / T).